The primary structure comprises 97 residues: Nucleoid-associated protein HPAG1_0033 (97 aa).

It belongs to the YbaB/EbfC family. As to quaternary structure, homodimer.

It is found in the cytoplasm. The protein resides in the nucleoid. Functionally, binds to DNA and alters its conformation. May be involved in regulation of gene expression, nucleoid organization and DNA protection. This chain is Nucleoid-associated protein HPAG1_0033, found in Helicobacter pylori (strain HPAG1).